Reading from the N-terminus, the 482-residue chain is MSEIRKDTLKAILLELECHFTWNLLKEDIDLFEVEDTIGQQLEFLTTKSRLALYNLLAYVKHLKGQNKDALECLEQAEEIIQQEHSDKEEVRSLVTWGNYAWVYYHMDQLEEAQKYTGKIGNVCKKLSSPSNYKLECPETDCEKGWALLKFGGKYYQKAKAAFEKALEVEPDNPEFNIGYAITVYRLDDSDREGSVKSFSLGPLRKAVTLNPDNSYIKVFLALKLQDVHAEAEGEKYIEEILDQISSQPYVLRYAAKFYRRKNSWNKALELLKKALEVTPTSSFLHHQMGLCYRAQMIQIKKATHNRPKGKDKLKVDELISSAIFHFKAAMERDSMFAFAYTDLANMYAEGGQYSNAEDIFRKALRLENITDDHKHQIHYHYGRFQEFHRKSENTAIHHYLEALKVKDRSPLRTKLTSALKKLSTKRLCHNALDVQSLSALGFVYKLEGEKRQAAEYYEKAQKIDPENAEFLTALCELRLSI.

8 TPR repeats span residues 51–84 (LALY…IQQE), 94–127 (LVTW…CKKL), 138–173 (PETD…EPDN), 181–214 (AITV…NPDN), 249–282 (PYVL…TPTS), 338–371 (AFAY…ENIT), 376–410 (HQIH…KDRS), and 435–468 (VQSL…DPEN). The segment at 254 to 260 (YAAKFYR) is interaction with the 5'-triphosphate group of PPP-RNA.

Belongs to the IFIT family. Monomer. Interacts with MAP3K7 and the components of the IKK core complex CHUK, IKBKB and IKBKG; the interaction synergizes the recruitment of IKK to MAP3K7 and enhances IKK phosphorylation.

It is found in the cell projection. The protein localises to the ruffle membrane. Interferon-induced RNA-binding protein involved in the human innate immune response. Has a broad and adaptable RNA structure recognition important for RNA recognition specificity in antiviral defense. Binds precursor and processed tRNAs as well as poly-U-tailed tRNA fragments. Specifically binds single-stranded RNA bearing a 5'-triphosphate group (PPP-RNA), thereby acting as a sensor of viral single-stranded RNAs. Single-stranded PPP-RNAs, which lack 2'-O-methylation of the 5' cap and bear a 5'-triphosphate group instead, are specific from viruses, providing a molecular signature to distinguish between self and non-self mRNAs by the host during viral infection. Directly binds PPP-RNA in a non-sequence-specific manner. Also recognizes and selectively binds AT-rich dsDNA. Additionally, as a mediator in innate immunity, positively regulates IKK-NFKB signaling by sinergizing the recruitment of IKK to MAP3K7. This Homo sapiens (Human) protein is Interferon-induced protein with tetratricopeptide repeats 5 (IFIT5).